The sequence spans 174 residues: NADH-ubiquinone oxidoreductase chain 6 (174 aa).

Helical transmembrane passes span 1–21 (MTYV…GFSS), 24–44 (SPIY…AIIL), 47–67 (GGGY…MVVF), 86–106 (VEVL…VLWV), and 151–171 (WLVV…IEIA).

The protein belongs to the complex I subunit 6 family. As to quaternary structure, core subunit of respiratory chain NADH dehydrogenase (Complex I) which is composed of 45 different subunits.

Its subcellular location is the mitochondrion inner membrane. The catalysed reaction is a ubiquinone + NADH + 5 H(+)(in) = a ubiquinol + NAD(+) + 4 H(+)(out). Functionally, core subunit of the mitochondrial membrane respiratory chain NADH dehydrogenase (Complex I) which catalyzes electron transfer from NADH through the respiratory chain, using ubiquinone as an electron acceptor. Essential for the catalytic activity and assembly of complex I. The chain is NADH-ubiquinone oxidoreductase chain 6 (MT-ND6) from Gorilla gorilla gorilla (Western lowland gorilla).